We begin with the raw amino-acid sequence, 282 residues long: MTSADYASRQRAIIAELNVAPHFDAEAEIARRIDFLAQYLRSTGLRTYVLGISGGVDSSTAGRLAQLSVERLRADGYDARFIAMRLPNGVQNDEEDAQRALAFVRADEVLTVDVKPAADAMLRSLVASGHAFETPAQQDFVHGNIKARERMIAQYAVAGARRGIVIGTDHAAESLMGFFTKFGDGGADILPLAGLSKRRVRGVARALGGEELIVMKVPTADLEELRPLRPDEHAYGVTYDEIDDFLEGKPVADRVYETVLRFYDGSRHKRALPYTMFDWPAA.

51 to 58 (GISGGVDS) lines the ATP pocket. Position 57 (aspartate 57) interacts with Mg(2+). Position 148 (arginine 148) interacts with deamido-NAD(+). Threonine 168 lines the ATP pocket. Mg(2+) is bound at residue glutamate 173. Deamido-NAD(+)-binding residues include lysine 181 and aspartate 188. Positions 197 and 219 each coordinate ATP. Position 268–269 (268–269 (HK)) interacts with deamido-NAD(+).

The protein belongs to the NAD synthetase family. As to quaternary structure, homodimer.

The enzyme catalyses deamido-NAD(+) + NH4(+) + ATP = AMP + diphosphate + NAD(+) + H(+). The protein operates within cofactor biosynthesis; NAD(+) biosynthesis; NAD(+) from deamido-NAD(+) (ammonia route): step 1/1. Functionally, catalyzes the ATP-dependent amidation of deamido-NAD to form NAD. Uses ammonia as a nitrogen source. This chain is NH(3)-dependent NAD(+) synthetase, found in Burkholderia cenocepacia (strain HI2424).